Reading from the N-terminus, the 340-residue chain is Photosystem II protein D1 (340 aa).

3 consecutive transmembrane segments (helical) span residues 25–42 (YIGW…LATV), 114–129 (HFFL…EWEF), and 138–152 (WIFV…AAAA). His114 provides a ligand contact to chlorophyll a. A pheophytin a-binding site is contributed by Trp122. Residues Asp166 and Glu185 each contribute to the [CaMn4O5] cluster site. A helical membrane pass occupies residues 193 to 214 (FHILGVAGVFGGSLFSAMHGSL). His194 is a binding site for chlorophyll a. Residues His211 and 260–261 (SF) each bind a quinone. His211 contacts Fe cation. His268 serves as a coordination point for Fe cation. Residues 270–284 (FLAAWPVIGIWFTSL) traverse the membrane as a helical segment. [CaMn4O5] cluster contacts are provided by His328, Glu329, Asp338, and Ala340.

It belongs to the reaction center PufL/M/PsbA/D family. In terms of assembly, PSII is composed of 1 copy each of membrane proteins PsbA, PsbB, PsbC, PsbD, PsbE, PsbF, PsbH, PsbI, PsbJ, PsbK, PsbL, PsbM, PsbT, PsbX, PsbY, PsbZ, Psb30/Ycf12, at least 3 peripheral proteins of the oxygen-evolving complex and a large number of cofactors. It forms dimeric complexes. Requires The D1/D2 heterodimer binds P680, chlorophylls that are the primary electron donor of PSII, and subsequent electron acceptors. It shares a non-heme iron and each subunit binds pheophytin, quinone, additional chlorophylls, carotenoids and lipids. D1 provides most of the ligands for the Mn4-Ca-O5 cluster of the oxygen-evolving complex (OEC). There is also a Cl(-1) ion associated with D1 and D2, which is required for oxygen evolution. The PSII complex binds additional chlorophylls, carotenoids and specific lipids. as cofactor. Tyr-157 forms a radical intermediate that is referred to as redox-active TyrZ, YZ or Y-Z.

It is found in the plastid. Its subcellular location is the chloroplast thylakoid membrane. The enzyme catalyses 2 a plastoquinone + 4 hnu + 2 H2O = 2 a plastoquinol + O2. Photosystem II (PSII) is a light-driven water:plastoquinone oxidoreductase that uses light energy to abstract electrons from H(2)O, generating O(2) and a proton gradient subsequently used for ATP formation. It consists of a core antenna complex that captures photons, and an electron transfer chain that converts photonic excitation into a charge separation. The D1/D2 (PsbA/PsbD) reaction center heterodimer binds P680, the primary electron donor of PSII as well as several subsequent electron acceptors. The sequence is that of Photosystem II protein D1 from Amphidinium operculatum (Dinoflagellate).